The chain runs to 320 residues: NAD-dependent protein deacylase SIR2rp2 (320 aa).

A mitochondrion-targeting transit peptide spans 1–22; the sequence is MRPAGTLASFLERCSARKRGRG. In terms of domain architecture, Deacetylase sirtuin-type spans 23-320; the sequence is CVVLTGAGCS…MFFRRKTIQL (298 aa). Residues 28-48 and 108-111 contribute to the NAD(+) site; these read GAGC…GQYH and QNVD. Residue His144 is the Proton acceptor of the active site. The Zn(2+) site is built by Cys152, Cys155, Cys207, and Cys210. NAD(+)-binding positions include 248–250, 274–276, and Gly294; these read GTS and NAG.

This sequence belongs to the sirtuin family. Class II subfamily. Zn(2+) serves as cofactor.

The protein resides in the mitochondrion matrix. It catalyses the reaction N(6)-acetyl-L-lysyl-[protein] + NAD(+) + H2O = 2''-O-acetyl-ADP-D-ribose + nicotinamide + L-lysyl-[protein]. In terms of biological role, NAD-dependent protein deacylase. Catalyzes the NAD-dependent hydrolysis of acyl groups from lysine residues. The chain is NAD-dependent protein deacylase SIR2rp2 (SIR2rp2) from Leishmania major.